Consider the following 459-residue polypeptide: Ribulose bisphosphate carboxylase large chain (459 aa).

K4 is modified (N6,N6,N6-trimethyllysine). Positions 113 and 163 each coordinate substrate. K165 (proton acceptor) is an active-site residue. Residue K167 coordinates substrate. The Mg(2+) site is built by K191, D193, and E194. K191 is modified (N6-carboxylysine). H284 acts as the Proton acceptor in catalysis. R285, H317, and S369 together coordinate substrate.

The protein belongs to the RuBisCO large chain family. Type I subfamily. Heterohexadecamer of 8 large chains and 8 small chains; disulfide-linked. The disulfide link is formed within the large subunit homodimers. Requires Mg(2+) as cofactor. In terms of processing, the disulfide bond which can form in the large chain dimeric partners within the hexadecamer appears to be associated with oxidative stress and protein turnover.

Its subcellular location is the plastid. The protein resides in the chloroplast. The enzyme catalyses 2 (2R)-3-phosphoglycerate + 2 H(+) = D-ribulose 1,5-bisphosphate + CO2 + H2O. The catalysed reaction is D-ribulose 1,5-bisphosphate + O2 = 2-phosphoglycolate + (2R)-3-phosphoglycerate + 2 H(+). In terms of biological role, ruBisCO catalyzes two reactions: the carboxylation of D-ribulose 1,5-bisphosphate, the primary event in carbon dioxide fixation, as well as the oxidative fragmentation of the pentose substrate in the photorespiration process. Both reactions occur simultaneously and in competition at the same active site. In Nyssa ogeche (Ogeechee tupelo), this protein is Ribulose bisphosphate carboxylase large chain.